Consider the following 324-residue polypeptide: Lipoyl synthase, chloroplastic (324 aa).

Low complexity-rich tracts occupy residues 1–12 (MCGPTATTVANA) and 20–29 (KGLPPGLKKP). The tract at residues 1–30 (MCGPTATTVANAGTGGETIKGLPPGLKKPP) is disordered. Positions 58, 63, 69, 86, 90, 93, and 302 each coordinate [4Fe-4S] cluster. In terms of domain architecture, Radical SAM core spans 72–291 (GDTGTATVML…AYGEEVIGFR (220 aa)).

This sequence belongs to the radical SAM superfamily. Lipoyl synthase family. It depends on [4Fe-4S] cluster as a cofactor.

It localises to the plastid. The protein localises to the chloroplast. It carries out the reaction [[Fe-S] cluster scaffold protein carrying a second [4Fe-4S](2+) cluster] + N(6)-octanoyl-L-lysyl-[protein] + 2 oxidized [2Fe-2S]-[ferredoxin] + 2 S-adenosyl-L-methionine + 4 H(+) = [[Fe-S] cluster scaffold protein] + N(6)-[(R)-dihydrolipoyl]-L-lysyl-[protein] + 4 Fe(3+) + 2 hydrogen sulfide + 2 5'-deoxyadenosine + 2 L-methionine + 2 reduced [2Fe-2S]-[ferredoxin]. It functions in the pathway protein modification; protein lipoylation via endogenous pathway; protein N(6)-(lipoyl)lysine from octanoyl-[acyl-carrier-protein]: step 2/2. Its function is as follows. Catalyzes the radical-mediated insertion of two sulfur atoms into the C-6 and C-8 positions of the octanoyl moiety bound to the lipoyl domains of lipoate-dependent enzymes, thereby converting the octanoylated domains into lipoylated derivatives. This Ostreococcus lucimarinus (strain CCE9901) protein is Lipoyl synthase, chloroplastic.